Reading from the N-terminus, the 232-residue chain is Enolase-phosphatase E1 (232 aa).

This sequence belongs to the HAD-like hydrolase superfamily. MasA/MtnC family. As to quaternary structure, monomer. Mg(2+) serves as cofactor.

It carries out the reaction 5-methylsulfanyl-2,3-dioxopentyl phosphate + H2O = 1,2-dihydroxy-5-(methylsulfanyl)pent-1-en-3-one + phosphate. It participates in amino-acid biosynthesis; L-methionine biosynthesis via salvage pathway; L-methionine from S-methyl-5-thio-alpha-D-ribose 1-phosphate: step 3/6. It functions in the pathway amino-acid biosynthesis; L-methionine biosynthesis via salvage pathway; L-methionine from S-methyl-5-thio-alpha-D-ribose 1-phosphate: step 4/6. Functionally, bifunctional enzyme that catalyzes the enolization of 2,3-diketo-5-methylthiopentyl-1-phosphate (DK-MTP-1-P) into the intermediate 2-hydroxy-3-keto-5-methylthiopentenyl-1-phosphate (HK-MTPenyl-1-P), which is then dephosphorylated to form the acireductone 1,2-dihydroxy-3-keto-5-methylthiopentene (DHK-MTPene). The polypeptide is Enolase-phosphatase E1 (Sorangium cellulosum (strain So ce56) (Polyangium cellulosum (strain So ce56))).